The following is a 185-amino-acid chain: MINELYKETRDRMVKSVKTLEKEMTRVRTGRASMTMLDGVKVDYYGTLTPLNQMASIAIPESRMITVQPWDISAIKEVEKGILKANIGLTPSSDGKIIRITIPPLTEDRRREIAKTVHNTCEEFKVAVRNIRRDSNDTLKSLQKDGDISEDENFKAQKEVQDITDEFIKQIEAVFAAKEKEILEL.

Belongs to the RRF family.

The protein resides in the cytoplasm. In terms of biological role, responsible for the release of ribosomes from messenger RNA at the termination of protein biosynthesis. May increase the efficiency of translation by recycling ribosomes from one round of translation to another. In Desulforapulum autotrophicum (strain ATCC 43914 / DSM 3382 / VKM B-1955 / HRM2) (Desulfobacterium autotrophicum), this protein is Ribosome-recycling factor.